A 431-amino-acid chain; its full sequence is Protein EARLY STARVATION 1, chloroplastic (431 aa).

A chloroplast-targeting transit peptide spans 1–19 (MAACSRGLVARPFDLTARG). Disordered stretches follow at residues 65-126 (GNKP…DTGI) and 403-431 (GVYP…SPLE). Positions 415–431 (PAPPSDDPPGMPPSPLE) are enriched in pro residues.

Belongs to the ESV1 family.

The protein resides in the plastid. It localises to the chloroplast stroma. Binds preferentially to highly ordered alpha-glucans, such as starch and crystalline maltodextrins. Involved in the organization of the starch granule matrix, thus influencing starch turnover by modulating the accessibility of starch polymers to modifying and degrading enzymes. Required for the control of starch degradation in leaves and starch distribution in nonphotosynthetic parts. Promotes gravitropic responses, negative in shoots but positive in roots, by facilitating starch granules (statoliths) formation in hypocotyls and roots columella. Facilitates tight packing of starch granules in grains. This is Protein EARLY STARVATION 1, chloroplastic from Oryza sativa subsp. japonica (Rice).